We begin with the raw amino-acid sequence, 455 residues long: Pup--protein ligase (455 aa).

Glutamate 12 provides a ligand contact to Mg(2+). Position 56 (arginine 56) interacts with ATP. Mg(2+) is bound at residue tyrosine 58. The active-site Proton acceptor is aspartate 60. Residue glutamate 66 participates in Mg(2+) binding. Residues threonine 69 and tryptophan 422 each coordinate ATP.

This sequence belongs to the Pup ligase/Pup deamidase family. Pup-conjugating enzyme subfamily.

The enzyme catalyses ATP + [prokaryotic ubiquitin-like protein]-L-glutamate + [protein]-L-lysine = ADP + phosphate + N(6)-([prokaryotic ubiquitin-like protein]-gamma-L-glutamyl)-[protein]-L-lysine.. It participates in protein degradation; proteasomal Pup-dependent pathway. The protein operates within protein modification; protein pupylation. Catalyzes the covalent attachment of the prokaryotic ubiquitin-like protein modifier Pup to the proteasomal substrate proteins, thereby targeting them for proteasomal degradation. This tagging system is termed pupylation. The ligation reaction involves the side-chain carboxylate of the C-terminal glutamate of Pup and the side-chain amino group of a substrate lysine. The sequence is that of Pup--protein ligase from Acidimicrobium ferrooxidans (strain DSM 10331 / JCM 15462 / NBRC 103882 / ICP).